A 339-amino-acid polypeptide reads, in one-letter code: D-erythrose-4-phosphate dehydrogenase (339 aa).

NAD(+)-binding positions include 12–13 and Arg-81; that span reads RI. Substrate is bound by residues 154-156, Arg-200, 213-214, and Arg-236; these read SCT and TK. Cys-155 (nucleophile) is an active-site residue. An NAD(+)-binding site is contributed by Asn-318.

This sequence belongs to the glyceraldehyde-3-phosphate dehydrogenase family. Epd subfamily. In terms of assembly, homotetramer.

Its subcellular location is the cytoplasm. The enzyme catalyses D-erythrose 4-phosphate + NAD(+) + H2O = 4-phospho-D-erythronate + NADH + 2 H(+). Its pathway is cofactor biosynthesis; pyridoxine 5'-phosphate biosynthesis; pyridoxine 5'-phosphate from D-erythrose 4-phosphate: step 1/5. Functionally, catalyzes the NAD-dependent conversion of D-erythrose 4-phosphate to 4-phosphoerythronate. The chain is D-erythrose-4-phosphate dehydrogenase from Escherichia coli O45:K1 (strain S88 / ExPEC).